Reading from the N-terminus, the 232-residue chain is GFP-like fluorescent chromoprotein dsFP483 (232 aa).

The 2-iminomethyl-5-imidazolinone (Gln-Gly) cross-link spans Q66–G68. Residue Y67 is modified to 2,3-didehydrotyrosine.

Belongs to the GFP family. In terms of processing, contains a chromophore consisting of modified amino acid residues. The chromophore is formed by autocatalytic backbone condensation between Xaa-N and Gly-(N+2), oxidation of Tyr-(N+1) to didehydrotyrosine, and formation of a double bond to the alpha-amino nitrogen of residue Xaa-N. Maturation of the chromophore requires nothing other than molecular oxygen. The precise stereochemistry of the tyrosine has not been determined. Oral disk.

In terms of biological role, pigment protein that is green in color. This Discosoma striata (Striped mushroom) protein is GFP-like fluorescent chromoprotein dsFP483.